The primary structure comprises 547 residues: Pyochelin synthase PchD (547 aa).

Belongs to the ATP-dependent AMP-binding enzyme family.

The catalysed reaction is salicylate + holo-[ACP] + ATP = salicyl-[ACP] + AMP + diphosphate. Its pathway is siderophore biosynthesis. The protein operates within antifungal biosynthesis. Functionally, involved in the biosynthesis of the siderophore pyochelin. Specifically adenylates salicylate and loads it onto the holo form of PchE via a thioester linkage to the phosphopanthetheine moiety. Is also involved in the synthesis of the antifungal antibiotic dihydroaeruginoic acid (Dha or hydroxyphenyl-thiazolinyl-carboxylate), a precursor of pyochelin. In Pseudomonas aeruginosa (strain ATCC 15692 / DSM 22644 / CIP 104116 / JCM 14847 / LMG 12228 / 1C / PRS 101 / PAO1), this protein is Pyochelin synthase PchD.